The sequence spans 269 residues: UPF0761 membrane protein NTHI0384 (269 aa).

6 helical membrane passes run 32 to 52 (MLAI…FPVF), 89 to 109 (MSAV…NNID), 128 to 148 (FAIY…SIGI), 168 to 188 (LLSF…YTVV), 203 to 223 (FLAA…VVTF), and 232 to 252 (AMAT…VVLV).

This sequence belongs to the UPF0761 family.

It localises to the cell inner membrane. The sequence is that of UPF0761 membrane protein NTHI0384 from Haemophilus influenzae (strain 86-028NP).